A 469-amino-acid chain; its full sequence is 3-isopropylmalate dehydratase large subunit (469 aa).

Cys347, Cys408, and Cys411 together coordinate [4Fe-4S] cluster.

It belongs to the aconitase/IPM isomerase family. LeuC type 1 subfamily. In terms of assembly, heterodimer of LeuC and LeuD. The cofactor is [4Fe-4S] cluster.

It carries out the reaction (2R,3S)-3-isopropylmalate = (2S)-2-isopropylmalate. It participates in amino-acid biosynthesis; L-leucine biosynthesis; L-leucine from 3-methyl-2-oxobutanoate: step 2/4. Functionally, catalyzes the isomerization between 2-isopropylmalate and 3-isopropylmalate, via the formation of 2-isopropylmaleate. The polypeptide is 3-isopropylmalate dehydratase large subunit (Haemophilus influenzae (strain ATCC 51907 / DSM 11121 / KW20 / Rd)).